We begin with the raw amino-acid sequence, 237 residues long: Ribonuclease 3 (237 aa).

Positions 5-136 (VDELSARLGV…VIAALFLDQG (132 aa)) constitute an RNase III domain. E49 is a Mg(2+) binding site. D53 is a catalytic residue. Residues D122 and E125 each contribute to the Mg(2+) site. E125 is a catalytic residue. The 70-residue stretch at 163-232 (DYKSRLQARI…ARAALDALEG (70 aa)) folds into the DRBM domain. The segment covering 185 to 208 (IDRSGPEHRPEFTVEVRAGEERLG) has biased composition (basic and acidic residues). The interval 185–237 (IDRSGPEHRPEFTVEVRAGEERLGTGKGPSKQAAEQAAARAALDALEGGTDGR) is disordered. A compositionally biased stretch (low complexity) spans 216-231 (QAAEQAAARAALDALE).

It belongs to the ribonuclease III family. In terms of assembly, homodimer. Mg(2+) serves as cofactor.

It localises to the cytoplasm. It catalyses the reaction Endonucleolytic cleavage to 5'-phosphomonoester.. Digests double-stranded RNA. Involved in the processing of primary rRNA transcript to yield the immediate precursors to the large and small rRNAs (23S and 16S). Processes some mRNAs, and tRNAs when they are encoded in the rRNA operon. Processes pre-crRNA and tracrRNA of type II CRISPR loci if present in the organism. The sequence is that of Ribonuclease 3 from Roseiflexus sp. (strain RS-1).